The chain runs to 418 residues: Actin-related protein 3-A (418 aa).

The protein belongs to the actin family. ARP3 subfamily. As to quaternary structure, component of the Arp2/3 complex composed of actr2/arp2, actr3/arp3, arpc1 (arpc1a or arpc1b), arpc2, arpc3, arpc4 and arpc5.

It localises to the cytoplasm. The protein resides in the cytoskeleton. The protein localises to the cell projection. It is found in the nucleus. Functionally, ATP-binding component of the Arp2/3 complex, a multiprotein complex that mediates actin polymerization upon stimulation by nucleation-promoting factor (NPF). The Arp2/3 complex mediates the formation of branched actin networks in the cytoplasm, providing the force for cell motility. Seems to contact the pointed end of the daughter actin filament. In addition to its role in the cytoplasmic cytoskeleton, the Arp2/3 complex also promotes actin polymerization in the nucleus, thereby regulating gene transcription and repair of damaged DNA. The Arp2/3 complex promotes homologous recombination (HR) repair in response to DNA damage by promoting nuclear actin polymerization, leading to drive motility of double-strand breaks (DSBs). The chain is Actin-related protein 3-A from Xenopus laevis (African clawed frog).